Here is a 520-residue protein sequence, read N- to C-terminus: Cobyric acid synthase (520 aa).

The 195-residue stretch at 257 to 451 (WLTVAAVRLP…VHGLLESDGF (195 aa)) folds into the GATase cobBQ-type domain. Catalysis depends on Cys338, which acts as the Nucleophile. His443 is an active-site residue.

This sequence belongs to the CobB/CobQ family. CobQ subfamily.

Its pathway is cofactor biosynthesis; adenosylcobalamin biosynthesis. In terms of biological role, catalyzes amidations at positions B, D, E, and G on adenosylcobyrinic A,C-diamide. NH(2) groups are provided by glutamine, and one molecule of ATP is hydrogenolyzed for each amidation. The sequence is that of Cobyric acid synthase from Nocardia farcinica (strain IFM 10152).